The primary structure comprises 107 residues: Anti-adapter protein IraM (107 aa).

This sequence belongs to the IraM/RssC family.

Its subcellular location is the cytoplasm. Its function is as follows. Inhibits RpoS proteolysis by regulating RssB activity, thereby increasing the stability of the sigma stress factor RpoS during magnesium starvation. The sequence is that of Anti-adapter protein IraM from Escherichia coli (strain 55989 / EAEC).